We begin with the raw amino-acid sequence, 690 residues long: Eukaryotic translation initiation factor 3 subunit B (690 aa).

The segment covering 1 to 11 (MAKKKSEEHSG) has biased composition (basic and acidic residues). The segment at 1–33 (MAKKKSEEHSGADANDSDYNEEPNFDDPPGYVD) is disordered. The span at 15-25 (NDSDYNEEPNF) shows a compositional bias: acidic residues. One can recognise an RRM domain in the interval 57–141 (SVVVVDNMPK…YTFAVNLFTD (85 aa)). 5 WD repeats span residues 207–246 (TRER…KIQK), 292–331 (GDGM…LLDL), 334–369 (IKIA…TLME), 442–484 (EIRE…KPSL), and 530–575 (PDHF…IRRT). The stretch at 613 to 646 (EQKDRLRLTRASKELLEKRAQLRETFMEYRNKRI) forms a coiled coil.

The protein belongs to the eIF-3 subunit B family. Component of the eukaryotic translation initiation factor 3 (eIF-3) complex. The eIF-3 complex interacts with pix. Interacts with mxt.

The protein localises to the cytoplasm. In terms of biological role, RNA-binding component of the eukaryotic translation initiation factor 3 (eIF-3) complex, which is involved in protein synthesis of a specialized repertoire of mRNAs and, together with other initiation factors, stimulates binding of mRNA and methionyl-tRNAi to the 40S ribosome. The eIF-3 complex specifically targets and initiates translation of a subset of mRNAs involved in cell proliferation. In Drosophila mojavensis (Fruit fly), this protein is Eukaryotic translation initiation factor 3 subunit B.